The following is a 143-amino-acid chain: Large ribosomal subunit protein uL15 (143 aa).

The interval 1–57 (MQLNNLKPAAGSKHAKRRVGRGIGSGLGKTAGRGHKGQKSRSGGFHKVGFEGGQMPL) is disordered. Residues 21 to 31 (RGIGSGLGKTA) show a composition bias toward gly residues.

Belongs to the universal ribosomal protein uL15 family. Part of the 50S ribosomal subunit.

Functionally, binds to the 23S rRNA. This chain is Large ribosomal subunit protein uL15, found in Ralstonia nicotianae (strain ATCC BAA-1114 / GMI1000) (Ralstonia solanacearum).